The following is a 717-amino-acid chain: Homeobox protein araucan (717 aa).

Disordered stretches follow at residues 46 to 80 (APAMSPTGGQDCQGSQPSGGAGGDASSGALSPNAL), 94 to 130 (GGSSAGGGGPADLATGGSLDGNGVGTTPTAGGAGGGG), 317 to 371 (NKMT…AIDE), 395 to 418 (SGGYPGGGGSSSGHPGGYHPYHHQ), 478 to 516 (TPPPAYMGHQSMPLQQQQQQQQQQQQAQHQYPPSEAGRD), 549 to 615 (TNNS…ASQR), and 675 to 717 (ARLG…KFTN). Over residues 94–103 (GGSSAGGGGP) the composition is skewed to gly residues. Positions 255–317 (LAARRKNATR…NARRRLKKEN (63 aa)) form a DNA-binding region, homeobox; TALE-type. Positions 317–327 (NKMTWEPKNRT) are enriched in basic and acidic residues. Residue Ser-336 is modified to Phosphoserine. The span at 337–347 (DDEKDKEDLEP) shows a compositional bias: basic and acidic residues. A compositionally biased stretch (gly residues) spans 395-410 (SGGYPGGGGSSSGHPG). Low complexity-rich tracts occupy residues 492–507 (QQQQQQQQQQQQAQHQ), 559–589 (PPQQQQPQQQQQQLQQGGTIHTTGSSSGPII), 599–614 (QQQQQLQQQSQSTASQ), and 687–698 (SSGNSSSSSSSS).

This sequence belongs to the TALE/IRO homeobox family.

It localises to the nucleus. Its function is as follows. Controls proneural and vein forming genes. Positive transcriptional controller of AC-SC (achaete-scute). May act as an activator that interacts with the transcriptional complex assembled on the AC and SC promoters and participates in transcription initiation. In Drosophila melanogaster (Fruit fly), this protein is Homeobox protein araucan (ara).